We begin with the raw amino-acid sequence, 189 residues long: Thermostable direct hemolysin 2 (189 aa).

An N-terminal signal peptide occupies residues 1-24 (MKYRYFAKKSFLFISMLAAFKTFA). C175 and C185 form a disulfide bridge.

It belongs to the TDH hemolysin family. Homodimer.

Bacterial hemolysins are exotoxins that attack blood cell membranes and cause cell rupture by mechanisms not clearly defined. In Vibrio parahaemolyticus serotype O3:K6 (strain RIMD 2210633), this protein is Thermostable direct hemolysin 2 (tdh2).